A 142-amino-acid chain; its full sequence is uncharacterized protein (142 aa).

This is an uncharacterized protein from Methanocaldococcus jannaschii (strain ATCC 43067 / DSM 2661 / JAL-1 / JCM 10045 / NBRC 100440) (Methanococcus jannaschii).